A 421-amino-acid polypeptide reads, in one-letter code: Serine hydroxymethyltransferase (421 aa).

(6S)-5,6,7,8-tetrahydrofolate is bound by residues Leu121 and 125 to 127; that span reads GHL. Lys229 is modified (N6-(pyridoxal phosphate)lysine).

The protein belongs to the SHMT family. Homodimer. Pyridoxal 5'-phosphate is required as a cofactor.

It is found in the cytoplasm. It carries out the reaction (6R)-5,10-methylene-5,6,7,8-tetrahydrofolate + glycine + H2O = (6S)-5,6,7,8-tetrahydrofolate + L-serine. It functions in the pathway one-carbon metabolism; tetrahydrofolate interconversion. The protein operates within amino-acid biosynthesis; glycine biosynthesis; glycine from L-serine: step 1/1. Its function is as follows. Catalyzes the reversible interconversion of serine and glycine with tetrahydrofolate (THF) serving as the one-carbon carrier. This reaction serves as the major source of one-carbon groups required for the biosynthesis of purines, thymidylate, methionine, and other important biomolecules. Also exhibits THF-independent aldolase activity toward beta-hydroxyamino acids, producing glycine and aldehydes, via a retro-aldol mechanism. The chain is Serine hydroxymethyltransferase from Haemophilus influenzae (strain PittGG).